The primary structure comprises 339 residues: Uridylate kinase PUMPKIN, chloroplastic (339 aa).

Residues 1–53 (MAIPLPLTSCSPISTSSSISRTSFVPLTLRNRTFFSNQNYSRRVLISCSSSLS) constitute a chloroplast transit peptide. The span at 52-79 (LSSDNGSSPDSMNGNGNGNGSSLNGQSS) shows a compositional bias: low complexity. The disordered stretch occupies residues 52 to 89 (LSSDNGSSPDSMNGNGNGNGSSLNGQSSFPRLPSFDGT). 102–105 (KVSG) contributes to the ATP binding site. Positions 110–115 (GDEEQN) are involved in allosteric activation by GTP. Gly144 provides a ligand contact to UMP. ATP is bound by residues Gly145 and Arg149. Asp165 serves as a coordination point for UMP. ATP contacts are provided by residues 180-184 (QATME) and 189-191 (PTR). 226–233 (TGNPFFTT) contacts UMP. ATP contacts are provided by Thr253, Phe259, and Asp262.

The protein belongs to the UMP kinase family. As to quaternary structure, homomultimer. Homohexamer. Forms RNA-containing megadalton-sized complexes. In terms of tissue distribution, expressed exclusively in leaves, but not in roots.

Its subcellular location is the plastid. It localises to the chloroplast stroma. It carries out the reaction UMP + ATP = UDP + ADP. It functions in the pathway pyrimidine metabolism; CTP biosynthesis via de novo pathway; UDP from UMP (UMPK route): step 1/1. In terms of biological role, catalyzes the reversible phosphorylation of UMP to UDP. Required for specific post-transcriptional processes of many plastid transcripts (e.g. PSI (PsaA, PsaF), PSII (D1, CP43, CP47), Cytochrome b(6)f (Cytb(6)), ATP synthase (AtpC), LHCs (LHCa3, LHCb2), and NDH (NdhH)), thus being essential for retaining photosynthetic activity in chloroplasts. Associates with group II introns of the plastid transcripts trnG-UCC, trnV-UAC, petB, petD and ndhA to stabilize corresponding precursor RNAs. The polypeptide is Uridylate kinase PUMPKIN, chloroplastic (Arabidopsis thaliana (Mouse-ear cress)).